A 393-amino-acid chain; its full sequence is NAD(P)H-quinone oxidoreductase subunit H, chloroplastic (393 aa).

The protein belongs to the complex I 49 kDa subunit family. NDH is composed of at least 16 different subunits, 5 of which are encoded in the nucleus.

Its subcellular location is the plastid. It is found in the chloroplast thylakoid membrane. The enzyme catalyses a plastoquinone + NADH + (n+1) H(+)(in) = a plastoquinol + NAD(+) + n H(+)(out). It catalyses the reaction a plastoquinone + NADPH + (n+1) H(+)(in) = a plastoquinol + NADP(+) + n H(+)(out). Its function is as follows. NDH shuttles electrons from NAD(P)H:plastoquinone, via FMN and iron-sulfur (Fe-S) centers, to quinones in the photosynthetic chain and possibly in a chloroplast respiratory chain. The immediate electron acceptor for the enzyme in this species is believed to be plastoquinone. Couples the redox reaction to proton translocation, and thus conserves the redox energy in a proton gradient. This Solanum bulbocastanum (Wild potato) protein is NAD(P)H-quinone oxidoreductase subunit H, chloroplastic.